A 244-amino-acid polypeptide reads, in one-letter code: Orotidine 5'-phosphate decarboxylase (244 aa).

Substrate contacts are provided by residues Asp18, Lys43, Asp73–Ile82, Ser130, Pro182–Gly192, Gly206, and Arg207. The Proton donor role is filled by Lys75.

Belongs to the OMP decarboxylase family. Type 1 subfamily. In terms of assembly, homodimer.

The catalysed reaction is orotidine 5'-phosphate + H(+) = UMP + CO2. It participates in pyrimidine metabolism; UMP biosynthesis via de novo pathway; UMP from orotate: step 2/2. Its function is as follows. Catalyzes the decarboxylation of orotidine 5'-monophosphate (OMP) to uridine 5'-monophosphate (UMP). This chain is Orotidine 5'-phosphate decarboxylase, found in Aeropyrum pernix (strain ATCC 700893 / DSM 11879 / JCM 9820 / NBRC 100138 / K1).